Here is a 248-residue protein sequence, read N- to C-terminus: MIVVFVGTAGSGKTTLTGEFGRYLEDNYKVAYVNLDTGVKELPYEPSIDVREFVTVEEIMREGYGPNGAIVESYDRLMEKFNEYLNKILRLEKENDYVLIDTPGQMETFLFHEFGVRLMENLPYPLVVYISDPEILKKPNDYCFVRFFALLIDLRLGATTIPALNKVDLLSEEEKERHRKYFEDIDYLTARLKLDPSMQGLMAYKMCSMMTEVLPPVRVLYLSAKTREGFEDLETLAYEHYCTCGDLT.

10–15 (GSGKTT) is a GTP binding site. Positions 65–67 (GPN) match the Gly-Pro-Asn (GPN)-loop; involved in dimer interface motif. GTP is bound by residues 165 to 168 (NKVD) and Ala-224.

It belongs to the GPN-loop GTPase family. In terms of assembly, homodimer. Interacts with DNA topoisomerase VI subunit B (top6B), DNA primase DnaG and RF-C.

In terms of biological role, small GTPase that may be involved in genome maintenance. Has weak intrinsic GTPase activity but displays no ATPase activity. This chain is GPN-loop GTPase PAB0955, found in Pyrococcus abyssi (strain GE5 / Orsay).